The sequence spans 147 residues: Large ribosomal subunit protein uL13 (147 aa).

The tract at residues 128 to 147 is disordered; sequence DQHPHGAQQPQPFEITQVAQ.

This sequence belongs to the universal ribosomal protein uL13 family. As to quaternary structure, part of the 50S ribosomal subunit.

Functionally, this protein is one of the early assembly proteins of the 50S ribosomal subunit, although it is not seen to bind rRNA by itself. It is important during the early stages of 50S assembly. The chain is Large ribosomal subunit protein uL13 from Streptomyces coelicolor (strain ATCC BAA-471 / A3(2) / M145).